The primary structure comprises 255 residues: Thiazole synthase (255 aa).

Lys96 serves as the catalytic Schiff-base intermediate with DXP. 1-deoxy-D-xylulose 5-phosphate is bound by residues Gly157, 183–184, and 205–206; these read AG and NT.

Belongs to the ThiG family. Homotetramer. Forms heterodimers with either ThiH or ThiS.

It localises to the cytoplasm. It carries out the reaction [ThiS sulfur-carrier protein]-C-terminal-Gly-aminoethanethioate + 2-iminoacetate + 1-deoxy-D-xylulose 5-phosphate = [ThiS sulfur-carrier protein]-C-terminal Gly-Gly + 2-[(2R,5Z)-2-carboxy-4-methylthiazol-5(2H)-ylidene]ethyl phosphate + 2 H2O + H(+). The protein operates within cofactor biosynthesis; thiamine diphosphate biosynthesis. Functionally, catalyzes the rearrangement of 1-deoxy-D-xylulose 5-phosphate (DXP) to produce the thiazole phosphate moiety of thiamine. Sulfur is provided by the thiocarboxylate moiety of the carrier protein ThiS. In vitro, sulfur can be provided by H(2)S. The polypeptide is Thiazole synthase (Geobacillus sp. (strain WCH70)).